A 604-amino-acid chain; its full sequence is Prostaglandin G/H synthase 2 (604 aa).

The N-terminal stretch at 1–17 (MLARALLLCAALALGQA) is a signal peptide. Residues 18-55 (ANPCCSNPCQNRGECLSVGFDRYKCDCTRTGYYGENCT) form the EGF-like domain. Cystine bridges form between C21-C32, C22-C145, C26-C42, and C44-C54. N53 carries N-linked (GlcNAc...) asparagine glycosylation. Residue R106 coordinates substrate. The N-linked (GlcNAc...) asparagine glycan is linked to N130. The active-site Proton acceptor is the H193. Substrate is bound at residue Y341. Residue Y371 is the For cyclooxygenase activity of the active site. Position 374 (H374) interacts with heme b. N396 is a glycosylation site (N-linked (GlcNAc...) asparagine). The residue at position 526 (C526) is an S-nitrosocysteine. C555 and C561 are disulfide-bonded. N580 carries N-linked (GlcNAc...) asparagine glycosylation.

Belongs to the prostaglandin G/H synthase family. In terms of assembly, homodimer. Heme b serves as cofactor. In terms of processing, S-nitrosylation by NOS2 (iNOS) activates enzyme activity. S-nitrosylation may take place on different Cys residues in addition to Cys-526.

It is found in the microsome membrane. Its subcellular location is the endoplasmic reticulum membrane. The protein localises to the nucleus inner membrane. The protein resides in the nucleus outer membrane. The enzyme catalyses (5Z,8Z,11Z,14Z)-eicosatetraenoate + AH2 + 2 O2 = prostaglandin H2 + A + H2O. The catalysed reaction is (5Z,8Z,11Z,14Z)-eicosatetraenoate + 2 O2 = prostaglandin G2. It carries out the reaction prostaglandin G2 + AH2 = prostaglandin H2 + A + H2O. It catalyses the reaction (5Z,8Z,11Z,14Z,17Z)-eicosapentaenoate + 2 O2 = prostaglandin G3. The enzyme catalyses prostaglandin G3 + AH2 = prostaglandin H3 + A + H2O. The catalysed reaction is (8Z,11Z,14Z)-eicosatrienoate + 2 O2 = prostaglandin G1. It carries out the reaction prostaglandin G1 + AH2 = prostaglandin H1 + A + H2O. It catalyses the reaction 2-(5Z,8Z,11Z,14Z)-eicosatetraenoyl-sn-glycero-3-phosphoethanolamine + 2 O2 = 2-(prostaglandin G2)-sn-glycero-3-phosphoethanolamine. The enzyme catalyses 2-(prostaglandin G2)-sn-glycero-3-phosphoethanolamine + AH2 = 2-(prostaglandin H2)-sn-glycero-3-phosphoethanolamine + A + H2O. The catalysed reaction is 2-(5Z,8Z,11Z,14Z)-eicosatetraenoyl-sn-glycero-3-phosphocholine + 2 O2 = 2-(prostaglandin G2)-sn-glycero-3-phosphocholine. It carries out the reaction 2-(prostaglandin G2)-sn-glycero-3-phosphocholine + AH2 = 2-(prostaglandin H2)-sn-glycero-3-phosphocholine + A + H2O. It catalyses the reaction (15S)-hydroperoxy-(5Z,8Z,11Z,13E)-eicosatetraenoate + AH2 = (15S)-hydroxy-(5Z,8Z,11Z,13E)-eicosatetraenoate + A + H2O. The enzyme catalyses 2-(5Z,8Z,11Z,14Z)-eicosatetraenoyl-sn-glycero-3-phosphocholine + AH2 + O2 = 2-[(15S)-hydroxy-(5Z,8Z,11Z,13E)-eicosatetraenoyl]-sn-glycero-3-phosphocholine + A + H2O. The catalysed reaction is 2-(5Z,8Z,11Z,14Z)-eicosatetraenoyl-sn-glycero-3-phosphocholine + AH2 + O2 = 2-[(15R)-hydroxy-(5Z,8Z,11Z,13E)-eicosatetraenoyl]-sn-glycero-3-phosphocholine + A + H2O. It carries out the reaction 2-(5Z,8Z,11Z,14Z)-eicosatetraenoyl-sn-glycero-3-phosphocholine + AH2 + O2 = 2-[(11R)-hydroxy-(5Z,8Z,12E,14Z)-eicosatetraenoyl]-sn-glycero-3-phosphocholine + A + H2O. It catalyses the reaction (9Z,12Z)-octadecadienoate + AH2 + O2 = 9-hydroxy-(10E,12Z)-octadecadienoate + A + H2O. The enzyme catalyses (9Z,12Z)-octadecadienoate + AH2 + O2 = 13-hydroxy-(9Z,11E)-octadecadienoate + A + H2O. The catalysed reaction is (5Z,8Z,11Z,14Z)-eicosatetraenoate + AH2 + O2 = (15R)-hydroxy-(5Z,8Z,11Z,13E)-eicosatetraenoate + A + H2O. It carries out the reaction (5Z,8Z,11Z,14Z)-eicosatetraenoate + AH2 + O2 = (11R)-hydroxy-(5Z,8Z,12E,14Z)-eicosatetraenoate + A + H2O. It catalyses the reaction (5Z,8Z,11Z,14Z,17Z)-eicosapentaenoate + AH2 + O2 = (11R)-hydroxy-(5Z,8Z,12E,14Z,17Z)-eicosapentaenoate + A + H2O. The enzyme catalyses (5Z,8Z,11Z,14Z,17Z)-eicosapentaenoate + AH2 + O2 = (18S)-hydroxy-(5Z,8Z,11Z,14Z,16E)-eicosapentaenoate + A + H2O. The catalysed reaction is (5Z,8Z,11Z,14Z,17Z)-eicosapentaenoate + AH2 + O2 = (18R)-hydroxy-(5Z,8Z,11Z,14Z,16E)-eicosapentaenoate + A + H2O. It carries out the reaction (5Z,8Z,11Z,14Z,17Z)-eicosapentaenoate + AH2 + O2 = (15R)-hydroxy-(5Z,8Z,11Z,13E,17Z)-eicosapentaenoate + A + H2O. It catalyses the reaction (5Z,8Z,11Z,14Z,17Z)-eicosapentaenoate + AH2 + O2 = (15S)-hydroxy-(5Z,8Z,11Z,13E,17Z)-eicosapentaenoate + A + H2O. The enzyme catalyses (7Z,10Z,13Z,16Z,19Z)-docosapentaenoate + AH2 + O2 = 13R-hydroxy-(7Z,10Z,14E,16Z,19Z)-docosapentaenoate + A + H2O. The catalysed reaction is (4Z,7Z,10Z,13Z,16Z,19Z)-docosahexaenoate + AH2 + O2 = 13-hydroxy-(4Z,7Z,10Z,14E,16Z,19Z)-docosahexaenoate + A + H2O. It carries out the reaction (5S)-hydroxy-(6E,8Z,11Z,14Z)-eicosatetraenoate + AH2 + O2 = (5S,15R)-dihydroxy-(6E,8Z,11Z,13E)-eicosatetraenoate + A + H2O. It catalyses the reaction (4Z,7Z,10Z,13Z,16Z,19Z)-docosahexaenoate + AH2 + O2 = 17R-hydroxy-(4Z,7Z,10Z,13Z,15E,19Z)-docosahexaenoate + A + H2O. The enzyme catalyses (5S)-hydroxy-(6E,8Z,11Z,14Z)-eicosatetraenoate + AH2 + O2 = (5S,15S)-dihydroxy-(6E,8Z,11Z,13E)-eicosatetraenoate + A + H2O. The catalysed reaction is (5S)-hydroxy-(6E,8Z,11Z,14Z)-eicosatetraenoate + AH2 + O2 = (5S,11R)-dihydroxy-(6E,8Z,12E,14Z)-eicosatetraenoate + A + H2O. It carries out the reaction 2-(5Z,8Z,11Z,14Z-eicosatetraenoyl)-glycerol + 2 O2 = 2-glyceryl-prostaglandin G2. It catalyses the reaction 2-glyceryl-prostaglandin G2 + AH2 = 2-glyceryl-prostaglandin H2 + A + H2O. The enzyme catalyses (5Z,8Z,11Z,14Z)-eicosatetraenoate + O2 = (15R)-hydroperoxy-(5Z,8Z,11Z,13E)-eicosatetraenoate. The catalysed reaction is (5Z,8Z,11Z,14Z)-eicosatetraenoate + O2 = 11R-hydroperoxy-(5Z,8Z,12E,14Z)-eicosatetraenoate. It carries out the reaction (9Z,12Z)-octadecadienoate + AH2 + O2 = (9R)-hydroxy-(10E,12Z)-octadecadienoate + A + H2O. It catalyses the reaction (9Z,12Z)-octadecadienoate + AH2 + O2 = (9S)-hydroxy-(10E,12Z)-octadecadienoate + A + H2O. The enzyme catalyses (9Z,12Z)-octadecadienoate + AH2 + O2 = (13S)-hydroxy-(9Z,11E)-octadecadienoate + A + H2O. The catalysed reaction is (9Z,12Z)-octadecadienoate + AH2 + O2 = (13R)-hydroxy-(9Z,11E)-octadecadienoate + A + H2O. The protein operates within lipid metabolism; prostaglandin biosynthesis. Its function is as follows. Dual cyclooxygenase and peroxidase in the biosynthesis pathway of prostanoids, a class of C20 oxylipins mainly derived from arachidonate ((5Z,8Z,11Z,14Z)-eicosatetraenoate, AA, C20:4(n-6)), with a particular role in the inflammatory response. The cyclooxygenase activity oxygenates AA to the hydroperoxy endoperoxide prostaglandin G2 (PGG2), and the peroxidase activity reduces PGG2 to the hydroxy endoperoxide prostaglandin H2 (PGH2), the precursor of all 2-series prostaglandins and thromboxanes. This complex transformation is initiated by abstraction of hydrogen at carbon 13 (with S-stereochemistry), followed by insertion of molecular O2 to form the endoperoxide bridge between carbon 9 and 11 that defines prostaglandins. The insertion of a second molecule of O2 (bis-oxygenase activity) yields a hydroperoxy group in PGG2 that is then reduced to PGH2 by two electrons. Similarly catalyzes successive cyclooxygenation and peroxidation of dihomo-gamma-linoleate (DGLA, C20:3(n-6)) and eicosapentaenoate (EPA, C20:5(n-3)) to corresponding PGH1 and PGH3, the precursors of 1- and 3-series prostaglandins. In an alternative pathway of prostanoid biosynthesis, converts 2-arachidonoyl lysophopholipids to prostanoid lysophopholipids, which are then hydrolyzed by intracellular phospholipases to release free prostanoids. Metabolizes 2-arachidonoyl glycerol yielding the glyceryl ester of PGH2, a process that can contribute to pain response. Generates lipid mediators from n-3 and n-6 polyunsaturated fatty acids (PUFAs) via a lipoxygenase-type mechanism. Oxygenates PUFAs to hydroperoxy compounds and then reduces them to corresponding alcohols. Plays a role in the generation of resolution phase interaction products (resolvins) during both sterile and infectious inflammation. Metabolizes docosahexaenoate (DHA, C22:6(n-3)) to 17R-HDHA, a precursor of the D-series resolvins (RvDs). As a component of the biosynthetic pathway of E-series resolvins (RvEs), converts eicosapentaenoate (EPA, C20:5(n-3)) primarily to 18S-HEPE that is further metabolized by ALOX5 and LTA4H to generate 18S-RvE1 and 18S-RvE2. In vascular endothelial cells, converts docosapentaenoate (DPA, C22:5(n-3)) to 13R-HDPA, a precursor for 13-series resolvins (RvTs) shown to activate macrophage phagocytosis during bacterial infection. In activated leukocytes, contributes to oxygenation of hydroxyeicosatetraenoates (HETE) to diHETES (5,15-diHETE and 5,11-diHETE). Can also use linoleate (LA, (9Z,12Z)-octadecadienoate, C18:2(n-6)) as substrate and produce hydroxyoctadecadienoates (HODEs) in a regio- and stereospecific manner, being (9R)-HODE ((9R)-hydroxy-(10E,12Z)-octadecadienoate) and (13S)-HODE ((13S)-hydroxy-(9Z,11E)-octadecadienoate) its major products. During neuroinflammation, plays a role in neuronal secretion of specialized preresolving mediators (SPMs) 15R-lipoxin A4 that regulates phagocytic microglia. In Cavia porcellus (Guinea pig), this protein is Prostaglandin G/H synthase 2 (PTGS2).